Consider the following 453-residue polypeptide: Tubulin gamma chain (453 aa).

142-148 contacts GTP; that stretch reads AGGTGSG.

The protein belongs to the tubulin family.

The protein localises to the cytoplasm. Its subcellular location is the cytoskeleton. The protein resides in the microtubule organizing center. It localises to the spindle pole body. Its function is as follows. Tubulin is the major constituent of microtubules. The gamma chain is found at microtubule organizing centers (MTOC) such as the spindle poles or the centrosome, suggesting that it is involved in the minus-end nucleation of microtubule assembly. In Coprinopsis cinerea (strain Okayama-7 / 130 / ATCC MYA-4618 / FGSC 9003) (Inky cap fungus), this protein is Tubulin gamma chain (TUB4).